We begin with the raw amino-acid sequence, 790 residues long: PGC-1 and ERR-induced regulator in muscle protein 1 (790 aa).

4 disordered regions span residues 38-391 (LLSS…TPIS), 425-449 (VASSPPVSEAVPRMTESSGLVSTPV), 507-545 (SVAGPSPNKPGSGQASARPSAPQTATGAHGGPGAWEAVA), and 626-648 (QRSRRRGSPEPLPRADPVPAPIP). Over residues 40-52 (SSDIDQGDSSGSS) the composition is skewed to low complexity. 2 stretches are compositionally biased toward polar residues: residues 80–89 (ATQQPVSRSQ) and 98–107 (TGQQTPSTSA). The segment covering 111–123 (APPSLGPGASPPS) has biased composition (low complexity). Pro residues predominate over residues 146–157 (APRPPGEPPGSP). Positions 158-169 (KSPGHSTGSQRP) are enriched in low complexity. The span at 170 to 179 (PDSPGAPPRS) shows a compositional bias: pro residues. The span at 366–391 (KPQSDTAVSTPASEPQSSVALSTPIS) shows a compositional bias: polar residues. Over residues 515-532 (KPGSGQASARPSAPQTAT) the composition is skewed to polar residues. Residues 635 to 648 (EPLPRADPVPAPIP) show a composition bias toward pro residues.

As to expression, muscle-specific expression is increased by endurance exercise.

The protein resides in the cytoplasm. The protein localises to the nucleus. In terms of biological role, regulates the expression of selective PPARGC1A/B and ESRRA/B/G target genes with roles in glucose and lipid metabolism, energy transfer, contractile function, muscle mitochondrial biogenesis and oxidative capacity. Required for the efficient induction of MT-CO2, MT-CO3, COX4I1, TFB1M, TFB2M, POLRMT and SIRT3 by PPARGC1A. Positively regulates the PPARGC1A/ESRRG-induced expression of CKMT2, TNNI3 and SLC2A4 and negatively regulates the PPARGC1A/ESRRG-induced expression of PDK4. The polypeptide is PGC-1 and ERR-induced regulator in muscle protein 1 (PERM1) (Homo sapiens (Human)).